We begin with the raw amino-acid sequence, 442 residues long: 3-phosphoshikimate 1-carboxyvinyltransferase (442 aa).

3-phosphoshikimate is bound by residues K25, S26, and R30. K25 is a binding site for phosphoenolpyruvate. G96 and R124 together coordinate phosphoenolpyruvate. Residues S171, S172, Q173, S203, D325, and K352 each contribute to the 3-phosphoshikimate site. Q173 contacts phosphoenolpyruvate. D325 serves as the catalytic Proton acceptor. Phosphoenolpyruvate-binding residues include R356, R400, and K425.

Belongs to the EPSP synthase family. As to quaternary structure, monomer.

It localises to the cytoplasm. The enzyme catalyses 3-phosphoshikimate + phosphoenolpyruvate = 5-O-(1-carboxyvinyl)-3-phosphoshikimate + phosphate. It participates in metabolic intermediate biosynthesis; chorismate biosynthesis; chorismate from D-erythrose 4-phosphate and phosphoenolpyruvate: step 6/7. Its function is as follows. Catalyzes the transfer of the enolpyruvyl moiety of phosphoenolpyruvate (PEP) to the 5-hydroxyl of shikimate-3-phosphate (S3P) to produce enolpyruvyl shikimate-3-phosphate and inorganic phosphate. This is 3-phosphoshikimate 1-carboxyvinyltransferase from Bordetella parapertussis (strain 12822 / ATCC BAA-587 / NCTC 13253).